The sequence spans 317 residues: Ribosome production factor 2 homolog (317 aa).

Positions 28 to 240 (KTAIFLRGNA…IRRVQPAESD (213 aa)) constitute a Brix domain. Residues 287-317 (MKGLKRSVEEREDSENEEVEIEEDVISDASE) form a disordered region. 4 positions are modified to phosphoserine: S293, S300, S313, and S316. Residues 296–317 (EREDSENEEVEIEEDVISDASE) are compositionally biased toward acidic residues.

Belongs to the RPF2 family. Component of a hexameric 5S RNP precursor complex, composed of 5S RNA, rrs1, rpf2, rpl5a/rpl5b, rpl11a/rpl11b and syo1; this complex acts as a precursor for ribosome assembly.

Its subcellular location is the nucleus. It is found in the nucleolus. This is Ribosome production factor 2 homolog from Schizosaccharomyces pombe (strain 972 / ATCC 24843) (Fission yeast).